A 644-amino-acid polypeptide reads, in one-letter code: ATP-dependent zinc metalloprotease FtsH (644 aa).

At 1 to 4 (MAKN) the chain is on the cytoplasmic side. A helical transmembrane segment spans residues 5-25 (LILWLVIAVVLMSVFQSFGPS). The Periplasmic portion of the chain corresponds to 26-98 (ESNGRKVDYS…VGEPPEEPSL (73 aa)). The helical transmembrane segment at 99–119 (LASIFISWFPMLLLIGVWIFF) threads the bilayer. Residues 120 to 644 (MRQMQGGGGK…NTMSEQLGDK (525 aa)) lie on the Cytoplasmic side of the membrane. An ATP-binding site is contributed by 192-199 (GPPGTGKT). His414 contacts Zn(2+). Glu415 is an active-site residue. Zn(2+) contacts are provided by His418 and Asp492. The segment at 599-644 (RPPAGWEDPNGTNNSDSNGTPQAPRPVDEPRTPNPGNTMSEQLGDK) is disordered. 2 stretches are compositionally biased toward polar residues: residues 608 to 619 (NGTNNSDSNGTP) and 632 to 644 (NPGN…LGDK).

In the central section; belongs to the AAA ATPase family. This sequence in the C-terminal section; belongs to the peptidase M41 family. In terms of assembly, homohexamer. Zn(2+) is required as a cofactor.

It localises to the cell inner membrane. Acts as a processive, ATP-dependent zinc metallopeptidase for both cytoplasmic and membrane proteins. Plays a role in the quality control of integral membrane proteins. The sequence is that of ATP-dependent zinc metalloprotease FtsH from Salmonella typhi.